Consider the following 225-residue polypeptide: Sugar fermentation stimulation protein homolog (225 aa).

This sequence belongs to the SfsA family.

The sequence is that of Sugar fermentation stimulation protein homolog from Sulfolobus acidocaldarius (strain ATCC 33909 / DSM 639 / JCM 8929 / NBRC 15157 / NCIMB 11770).